The sequence spans 284 residues: Bifunctional protein FolD (284 aa).

NADP(+) contacts are provided by residues 166–168, Ser191, and Ile232; that span reads GAS.

It belongs to the tetrahydrofolate dehydrogenase/cyclohydrolase family. Homodimer.

It catalyses the reaction (6R)-5,10-methylene-5,6,7,8-tetrahydrofolate + NADP(+) = (6R)-5,10-methenyltetrahydrofolate + NADPH. The catalysed reaction is (6R)-5,10-methenyltetrahydrofolate + H2O = (6R)-10-formyltetrahydrofolate + H(+). Its pathway is one-carbon metabolism; tetrahydrofolate interconversion. Functionally, catalyzes the oxidation of 5,10-methylenetetrahydrofolate to 5,10-methenyltetrahydrofolate and then the hydrolysis of 5,10-methenyltetrahydrofolate to 10-formyltetrahydrofolate. This Neisseria meningitidis serogroup A / serotype 4A (strain DSM 15465 / Z2491) protein is Bifunctional protein FolD.